The following is a 527-amino-acid chain: uncharacterized protein (527 aa).

4 disordered regions span residues 1 to 49 (MSSF…IKDE), 99 to 307 (DFNF…ATTT), 319 to 353 (TEINNNNSNSNNLPSIPIGNEKSKINDNQDEEDEN), and 382 to 419 (YINNDDGDDDDDDDENENENDSQPEEEYEENKQQQQQE). Residues 8–17 (YDDESEEEDN) are compositionally biased toward acidic residues. 2 stretches are compositionally biased toward low complexity: residues 18 to 44 (NNNNNNNNNNNNNNIINNNNNNNNSNN) and 99 to 115 (DFNFYNNNNNSNSNSNN). Positions 141 to 150 (NEFRNPDLKN) are enriched in basic and acidic residues. Low complexity-rich tracts occupy residues 167-178 (SSQNTTTTQQSS) and 186-222 (NNNNNNNNNNNNNNNNNNNNNNNNNNNNNNNNNNSNN). The span at 229 to 248 (DDKSKKINENENTVNKKDNI) shows a compositional bias: basic and acidic residues. The span at 283 to 296 (LRKKLLKNQPKTKK) shows a compositional bias: basic residues. 2 stretches are compositionally biased toward low complexity: residues 297 to 307 (STTTTTTATTT) and 319 to 330 (TEINNNNSNSNN). The segment covering 386–410 (DDGDDDDDDDENENENDSQPEEEYE) has biased composition (acidic residues).

This is an uncharacterized protein from Dictyostelium discoideum (Social amoeba).